Consider the following 98-residue polypeptide: ESAT-6-like protein EsxM (98 aa).

The protein belongs to the WXG100 family. CFP-10 subfamily.

The protein resides in the secreted. Its function is as follows. Alters the host macrophage cytoskeleton and enhances macrophage motility. Promotes granuloma efflux, extrapulmonary dissemination of infection and bone disease. In Mycobacterium marinum (strain ATCC BAA-535 / M), this protein is ESAT-6-like protein EsxM.